Here is a 398-residue protein sequence, read N- to C-terminus: Unsaturated chondroitin disaccharide hydrolase (398 aa).

Asp115 (nucleophile) is an active-site residue. Substrate contacts are provided by Asp115, Asp175, Gly233, Thr235, Arg247, Trp251, Ser365, and Ser368. The Proton donor role is filled by Asp175.

The protein belongs to the glycosyl hydrolase 88 family. As to quaternary structure, monomer.

It catalyses the reaction beta-D-4-deoxy-Delta(4)-GlcpA-(1-&gt;3)-beta-D-GalpNAc6S + H2O = N-acetyl-beta-D-galactosamine 6-sulfate + 5-dehydro-4-deoxy-D-glucuronate. Functionally, catalyzes the hydrolysis of unsaturated hyaluronate and chondroitin disaccharides. Also degrades unsaturated heparin disaccharides. Releases 4-deoxy-4,5-didehydro D-glucuronic acid or 4-deoxy-4,5-didehydro L-iduronic acid from chondroitin disaccharides, hyaluronan disaccharides and heparin disaccharides and cleaves both glycosidic (1-&gt;3) and (1-&gt;4) bonds. Prefers sulfated glycosaminoglycans compared to unsulfated glycosaminoglycans. Probably required for mammalian cells invasion through the degradation of extracellular sulfated glycosaminoglycans such as chondroitin and hyaluronan. The polypeptide is Unsaturated chondroitin disaccharide hydrolase (Streptococcus agalactiae serotype III (strain NEM316)).